A 231-amino-acid chain; its full sequence is Chlorophyll a-b binding protein 1B-20, chloroplastic (231 aa).

Positions 1–25 (RIQAYRFRTRVPPSPAASGSPRSTR) are disordered. The transit peptide at 1–31 (RIQAYRFRTRVPPSPAASGSPRSTRRDVAVQ) directs the protein to the chloroplast. A chlorophyll b-binding site is contributed by W36. F56 contributes to the chlorophyll a binding site. R80, S118, E133, and R136 together coordinate chlorophyll b. The chlorophyll a site is built by K182, E183, N186, R188, Q200, and H215. The helical transmembrane segment at 183–199 (ELANGRLAMLAFLGFLV) threads the bilayer.

This sequence belongs to the light-harvesting chlorophyll a/b-binding (LHC) protein family. As to quaternary structure, the LHC complex consists of chlorophyll a-b binding proteins. Requires Binds at least 14 chlorophylls (8 Chl-a and 6 Chl-b) and carotenoids such as lutein and neoxanthin. as cofactor. In terms of processing, photoregulated by reversible phosphorylation of its threonine residues.

It localises to the plastid. The protein localises to the chloroplast thylakoid membrane. Functionally, the light-harvesting complex (LHC) functions as a light receptor, it captures and delivers excitation energy to photosystems with which it is closely associated. The chain is Chlorophyll a-b binding protein 1B-20, chloroplastic (LHC Ib-20) from Hordeum vulgare (Barley).